Consider the following 101-residue polypeptide: Protein Tat (101 aa).

Residues 1 to 24 (MEPVDPSLDPWNHPGSQPTTPCTK) are interaction with human CREBBP. Residues 1 to 48 (MEPVDPSLDPWNHPGSQPTTPCTKCYCKRCCFHCQWCFTTKGLGISYG) form a transactivation region. Zn(2+) contacts are provided by Cys22, Cys25, and Cys27. The segment at 22–37 (CTKCYCKRCCFHCQWC) is cysteine-rich. Residue Lys28 is modified to N6-acetyllysine; by host PCAF. Zn(2+) is bound by residues Cys30, His33, Cys34, and Cys37. A core region spans residues 38 to 48 (FTTKGLGISYG). The span at 48-58 (GRKKRRQRHRT) shows a compositional bias: basic residues. Positions 48–101 (GRKKRRQRHRTPQSSQVHQNSLPKQPLSQARGDPTGPKESKKEVESKAKTDPCA) are disordered. Positions 49–57 (RKKRRQRHR) match the Nuclear localization signal, RNA-binding (TAR), and protein transduction motif. The tract at residues 49–86 (RKKRRQRHRTPQSSQVHQNSLPKQPLSQARGDPTGPKE) is interaction with the host capping enzyme RNGTT. N6-acetyllysine; by host EP300 and GCN5L2 is present on residues Lys50 and Lys51. Asymmetric dimethylarginine; by host PRMT6 occurs at positions 52 and 53. Residues 59 to 75 (PQSSQVHQNSLPKQPLS) are compositionally biased toward polar residues. Residue Lys71 forms a Glycyl lysine isopeptide (Lys-Gly) (interchain with G-Cter in ubiquitin) linkage. The Cell attachment site signature appears at 78–80 (RGD). Residues 83–101 (GPKESKKEVESKAKTDPCA) are compositionally biased toward basic and acidic residues.

This sequence belongs to the lentiviruses Tat family. In terms of assembly, interacts with host CCNT1. Associates with the P-TEFb complex composed at least of Tat, P-TEFb (CDK9 and CCNT1), TAR RNA, RNA Pol II. Recruits the HATs CREBBP, TAF1/TFIID, EP300, PCAF and GCN5L2. Interacts with host KAT5/Tip60; this interaction targets the latter to degradation. Interacts with the host deacetylase SIRT1. Interacts with host capping enzyme RNGTT; this interaction stimulates RNGTT. Binds to host KDR, and to the host integrins ITGAV/ITGB3 and ITGA5/ITGB1. Interacts with host KPNB1/importin beta-1 without previous binding to KPNA1/importin alpha-1. Interacts with EIF2AK2. Interacts with host nucleosome assembly protein NAP1L1; this interaction may be required for the transport of Tat within the nucleus, since the two proteins interact at the nuclear rim. Interacts with host C1QBP/SF2P32; this interaction involves lysine-acetylated Tat. Interacts with the host chemokine receptors CCR2, CCR3 and CXCR4. Interacts with host DPP4/CD26; this interaction may trigger an anti-proliferative effect. Interacts with host LDLR. Interacts with the host extracellular matrix metalloproteinase MMP1. Interacts with host PRMT6; this interaction mediates Tat's methylation. Interacts with, and is ubiquitinated by MDM2/Hdm2. Interacts with host PSMC3 and HTATIP2. Interacts with STAB1; this interaction may overcome SATB1-mediated repression of IL2 and IL2RA (interleukin) in T cells by binding to the same domain than HDAC1. Interacts (when acetylated) with human CDK13, thereby increasing HIV-1 mRNA splicing and promoting the production of the doubly spliced HIV-1 protein Nef. Interacts with host TBP; this interaction modulates the activity of transcriptional pre-initiation complex. Interacts with host RELA. Interacts with host PLSCR1; this interaction negatively regulates Tat transactivation activity by altering its subcellular distribution. In terms of processing, asymmetrical arginine methylation by host PRMT6 seems to diminish the transactivation capacity of Tat and affects the interaction with host CCNT1. Acetylation by EP300, CREBBP, GCN5L2/GCN5 and PCAF regulates the transactivation activity of Tat. EP300-mediated acetylation of Lys-50 promotes dissociation of Tat from the TAR RNA through the competitive binding to PCAF's bromodomain. In addition, the non-acetylated Tat's N-terminus can also interact with PCAF. PCAF-mediated acetylation of Lys-28 enhances Tat's binding to CCNT1. Lys-50 is deacetylated by SIRT1. Post-translationally, polyubiquitination by host MDM2 does not target Tat to degradation, but activates its transactivation function and fosters interaction with CCNT1 and TAR RNA. In terms of processing, phosphorylated by EIF2AK2 on serine and threonine residues adjacent to the basic region important for TAR RNA binding and function. Phosphorylation of Tat by EIF2AK2 is dependent on the prior activation of EIF2AK2 by dsRNA.

The protein resides in the host nucleus. The protein localises to the host nucleolus. It localises to the host cytoplasm. Its subcellular location is the secreted. Its function is as follows. Transcriptional activator that increases RNA Pol II processivity, thereby increasing the level of full-length viral transcripts. Recognizes a hairpin structure at the 5'-LTR of the nascent viral mRNAs referred to as the transactivation responsive RNA element (TAR) and recruits the cyclin T1-CDK9 complex (P-TEFb complex) that will in turn hyperphosphorylate the RNA polymerase II to allow efficient elongation. The CDK9 component of P-TEFb and other Tat-activated kinases hyperphosphorylate the C-terminus of RNA Pol II that becomes stabilized and much more processive. Other factors such as HTATSF1/Tat-SF1, SUPT5H/SPT5, and HTATIP2 are also important for Tat's function. Besides its effect on RNA Pol II processivity, Tat induces chromatin remodeling of proviral genes by recruiting the histone acetyltransferases (HATs) CREBBP, EP300 and PCAF to the chromatin. This also contributes to the increase in proviral transcription rate, especially when the provirus integrates in transcriptionally silent region of the host genome. To ensure maximal activation of the LTR, Tat mediates nuclear translocation of NF-kappa-B by interacting with host RELA. Through its interaction with host TBP, Tat may also modulate transcription initiation. Tat can reactivate a latently infected cell by penetrating in it and transactivating its LTR promoter. In the cytoplasm, Tat is thought to act as a translational activator of HIV-1 mRNAs. In terms of biological role, extracellular circulating Tat can be endocytosed by surrounding uninfected cells via the binding to several surface receptors such as CD26, CXCR4, heparan sulfate proteoglycans (HSPG) or LDLR. Neurons are rarely infected, but they internalize Tat via their LDLR. Through its interaction with nuclear HATs, Tat is potentially able to control the acetylation-dependent cellular gene expression. Modulates the expression of many cellular genes involved in cell survival, proliferation or in coding for cytokines or cytokine receptors. Tat plays a role in T-cell and neurons apoptosis. Tat induced neurotoxicity and apoptosis probably contribute to neuroAIDS. Circulating Tat also acts as a chemokine-like and/or growth factor-like molecule that binds to specific receptors on the surface of the cells, affecting many cellular pathways. In the vascular system, Tat binds to ITGAV/ITGB3 and ITGA5/ITGB1 integrins dimers at the surface of endothelial cells and competes with bFGF for heparin-binding sites, leading to an excess of soluble bFGF. In Human immunodeficiency virus type 1 group M subtype F1 (isolate VI850) (HIV-1), this protein is Protein Tat.